The primary structure comprises 397 residues: RNA polymerase II elongation factor ELL3 (397 aa).

Disordered regions lie at residues 164 to 219 (VSDP…KRSV) and 237 to 284 (VPSP…PEDI). Positions 168 to 178 (LASNQGQSLPG) are enriched in polar residues. Over residues 250–262 (QEGEDWEQEDEDM) the composition is skewed to acidic residues. The segment covering 269–281 (SSSVQEDSESPSP) has biased composition (low complexity). Positions 285 to 395 (PDYLLQYRAI…LILEFEEKNR (111 aa)) constitute an OCEL domain.

The protein belongs to the ELL/occludin family. As to quaternary structure, interacts with AFF4. Component of the super elongation complex (SEC), at least composed of EAF1, EAF2, CDK9, MLLT3/AF9, AFF (AFF1 or AFF4), the P-TEFb complex and ELL (ELL, ELL2 or ELL3). Component of the little elongation complex (LEC), at least composed of ELL (ELL, ELL2 or ELL3), ZC3H8, ICE1 and ICE2. As to expression, testis specific.

It is found in the nucleus. Enhancer-binding elongation factor that specifically binds enhancers in embryonic stem cells (ES cells), marks them, and is required for their future activation during stem cell specification. Does not only bind to enhancer regions of active genes, but also marks the enhancers that are in a poised or inactive state in ES cells and is required for establishing proper RNA polymerase II occupancy at developmentally regulated genes in a cohesin-dependent manner. Probably required for priming developmentally regulated genes for later recruitment of the super elongation complex (SEC), for transcriptional activation during differentiation. Required for recruitment of P-TEFb within SEC during differentiation. Probably preloaded on germ cell chromatin, suggesting that it may prime gene activation by marking enhancers as early as in the germ cells. Promoting epithelial-mesenchymal transition (EMT). Elongation factor component of the super elongation complex (SEC), a complex required to increase the catalytic rate of RNA polymerase II transcription by suppressing transient pausing by the polymerase at multiple sites along the DNA. Component of the little elongation complex (LEC), a complex required to regulate small nuclear RNA (snRNA) gene transcription by RNA polymerase II and III. The polypeptide is RNA polymerase II elongation factor ELL3 (ELL3) (Homo sapiens (Human)).